Consider the following 395-residue polypeptide: Sensor protein DltS (395 aa).

2 helical membrane passes run 9-29 (FVFL…AVSN) and 136-156 (FLIL…SLYL). Residues 177-387 (DASHELKTPI…RLEVQLPIDG (211 aa)) form the Histidine kinase domain. His180 bears the Phosphohistidine; by autocatalysis mark.

It localises to the cell membrane. It catalyses the reaction ATP + protein L-histidine = ADP + protein N-phospho-L-histidine.. Functionally, member of the two-component regulatory system DltS/DltR. Regulates the expression of the dlt operon. Probably phosphorylates DltR. The polypeptide is Sensor protein DltS (dltS) (Streptococcus agalactiae serotype V (strain ATCC BAA-611 / 2603 V/R)).